The sequence spans 57 residues: MFTVFLLVVLATTVVSFPSDRESDGANDEARTDEPEEHGPDRNGCCRNPACESHRCG.

Positions 1–16 (MFTVFLLVVLATTVVS) are cleaved as a signal peptide. Residues 17–42 (FPSDRESDGANDEARTDEPEEHGPDR) constitute a propeptide that is removed on maturation. Positions 17–46 (FPSDRESDGANDEARTDEPEEHGPDRNGCC) are disordered. Residues 19 to 41 (SDRESDGANDEARTDEPEEHGPD) show a composition bias toward basic and acidic residues. 2 cysteine pairs are disulfide-bonded: Cys45–Cys51 and Cys46–Cys56. A Cysteine amide modification is found at Cys56.

This sequence belongs to the conotoxin A superfamily. Expressed by the venom duct.

The protein resides in the secreted. Functionally, alpha-conotoxins act on postsynaptic membranes, they bind to the nicotinic acetylcholine receptors (nAChR) and thus inhibit them. In Conus stercusmuscarum (Fly-specked cone), this protein is Alpha-conotoxin-like Sm1.2.